Consider the following 424-residue polypeptide: O-methyltransferase bfoD (424 aa).

An S-adenosyl-L-methionine-binding site is contributed by aspartate 275. The Proton acceptor role is filled by histidine 326.

The protein belongs to the class I-like SAM-binding methyltransferase superfamily. Cation-independent O-methyltransferase family.

It participates in secondary metabolite biosynthesis. Functionally, cytochrome P450 monooxygenase; part of the gene cluster that mediates the biosynthesis of bifonsecin B, a dimeric gamma-naphthopyrone. The first step in the biosynthesis of bifonsecin B is the production of gamma-naphthopyrone precursor YWA1 by the non-reducing polyketide synthase albA, via condensation of one acetyl-CoA starter unit with 6 malonyl-CoA units. YWA1 is then methylated by bfoE at position C-6 to yield foncesin which is further methylated at position C-8 by bfoD to produce fonsecin B. A key enzyme in the biosynthetic pathway is the cytochrome P450 monooxygenase bfoB which catalyzes the oxidative dimerization of fonsecin B to bifonsecin B. Bfob also catalyzes the oxidative dimerization of rubrofusarin B into nigerone. The stereoselectivity of bfoB is influenced by the two natural monomeric substrates; homodimerization of fonsecin B yields a stereochemically pure biaryl, M-foncerine B, while rubrofusarin B yields a mixture of enantiomers M- and P-nigerone. The sequence is that of O-methyltransferase bfoD from Aspergillus brasiliensis (strain CBS 101740 / IMI 381727 / IBT 21946).